A 256-amino-acid polypeptide reads, in one-letter code: Na(+)-translocating NADH-quinone reductase subunit C (256 aa).

Residues 12-32 (LGVVIGLSLVCSIIVSTAAVG) form a helical membrane-spanning segment. T224 carries the FMN phosphoryl threonine modification.

The protein belongs to the NqrC family. As to quaternary structure, composed of six subunits; NqrA, NqrB, NqrC, NqrD, NqrE and NqrF. FMN is required as a cofactor.

The protein localises to the cell inner membrane. It carries out the reaction a ubiquinone + n Na(+)(in) + NADH + H(+) = a ubiquinol + n Na(+)(out) + NAD(+). With respect to regulation, this reaction is tightly coupled to the Na(+) pumping activity and specifically requires Na(+) for activity. Inhibited by korormicin and 2-N-heptyl-4-hydroxyquinoline N-oxide (HQNO). Its function is as follows. NQR complex catalyzes the reduction of ubiquinone-1 to ubiquinol by two successive reactions, coupled with the transport of Na(+) ions from the cytoplasm to the periplasm. NqrA to NqrE are probably involved in the second step, the conversion of ubisemiquinone to ubiquinol. This chain is Na(+)-translocating NADH-quinone reductase subunit C, found in Vibrio alginolyticus.